Consider the following 507-residue polypeptide: ATP synthase subunit alpha, chloroplastic (507 aa).

170 to 177 serves as a coordination point for ATP; sequence GDRQTGKT.

The protein belongs to the ATPase alpha/beta chains family. In terms of assembly, F-type ATPases have 2 components, CF(1) - the catalytic core - and CF(0) - the membrane proton channel. CF(1) has five subunits: alpha(3), beta(3), gamma(1), delta(1), epsilon(1). CF(0) has four main subunits: a, b, b' and c.

The protein resides in the plastid. Its subcellular location is the chloroplast thylakoid membrane. The catalysed reaction is ATP + H2O + 4 H(+)(in) = ADP + phosphate + 5 H(+)(out). Functionally, produces ATP from ADP in the presence of a proton gradient across the membrane. The alpha chain is a regulatory subunit. The polypeptide is ATP synthase subunit alpha, chloroplastic (Nymphaea alba (White water-lily)).